The primary structure comprises 530 residues: Histone-arginine methyltransferase CARMER (530 aa).

The SAM-dependent MTase PRMT-type domain maps to 141–450; it reads ASQYFQFYGY…QSYDVTIDLH (310 aa). Residues Gln154, Arg163, Gly187, Glu209, Glu238, and Thr266 each contribute to the S-adenosyl-L-methionine site. Arg501 is modified (asymmetric dimethylarginine; by autocatalysis).

The protein belongs to the class I-like SAM-binding methyltransferase superfamily. Protein arginine N-methyltransferase family. As to quaternary structure, homodimer. The dimethylated protein is the major form.

It is found in the cytoplasm. The protein localises to the nucleus. The catalysed reaction is L-arginyl-[protein] + 2 S-adenosyl-L-methionine = N(omega),N(omega)-dimethyl-L-arginyl-[protein] + 2 S-adenosyl-L-homocysteine + 2 H(+). Its function is as follows. Methylates (mono- and asymmetric dimethylation) the guanidino nitrogens of arginyl residues in proteins. May methylate histone H3 at 'Arg-17' and activate transcription via chromatin remodeling. The sequence is that of Histone-arginine methyltransferase CARMER (Art4) from Drosophila sechellia (Fruit fly).